We begin with the raw amino-acid sequence, 307 residues long: Aspartate carbamoyltransferase catalytic subunit (307 aa).

Carbamoyl phosphate contacts are provided by arginine 54 and threonine 55. Position 83 (lysine 83) interacts with L-aspartate. 3 residues coordinate carbamoyl phosphate: arginine 104, histidine 132, and glutamine 135. L-aspartate contacts are provided by arginine 165 and arginine 228. 2 residues coordinate carbamoyl phosphate: leucine 267 and proline 268.

This sequence belongs to the aspartate/ornithine carbamoyltransferase superfamily. ATCase family. Heterododecamer (2C3:3R2) of six catalytic PyrB chains organized as two trimers (C3), and six regulatory PyrI chains organized as three dimers (R2).

The catalysed reaction is carbamoyl phosphate + L-aspartate = N-carbamoyl-L-aspartate + phosphate + H(+). It functions in the pathway pyrimidine metabolism; UMP biosynthesis via de novo pathway; (S)-dihydroorotate from bicarbonate: step 2/3. In terms of biological role, catalyzes the condensation of carbamoyl phosphate and aspartate to form carbamoyl aspartate and inorganic phosphate, the committed step in the de novo pyrimidine nucleotide biosynthesis pathway. This is Aspartate carbamoyltransferase catalytic subunit from Clostridium perfringens (strain SM101 / Type A).